The primary structure comprises 58 residues: Large ribosomal subunit protein uL30 (58 aa).

This sequence belongs to the universal ribosomal protein uL30 family. In terms of assembly, part of the 50S ribosomal subunit.

The sequence is that of Large ribosomal subunit protein uL30 from Desulfovibrio desulfuricans (strain ATCC 27774 / DSM 6949 / MB).